The sequence spans 408 residues: LL-diaminopimelate aminotransferase (408 aa).

Y15 and G42 together coordinate substrate. Pyridoxal 5'-phosphate-binding positions include Y72, 108 to 109, Y132, N187, Y218, and 246 to 248; these read SK and SFS. Positions 109, 132, and 187 each coordinate substrate. K249 carries the N6-(pyridoxal phosphate)lysine modification. R257 and N292 together coordinate pyridoxal 5'-phosphate. Substrate contacts are provided by N292 and R388.

It belongs to the class-I pyridoxal-phosphate-dependent aminotransferase family. LL-diaminopimelate aminotransferase subfamily. Homodimer. Pyridoxal 5'-phosphate serves as cofactor.

The enzyme catalyses (2S,6S)-2,6-diaminopimelate + 2-oxoglutarate = (S)-2,3,4,5-tetrahydrodipicolinate + L-glutamate + H2O + H(+). Its pathway is amino-acid biosynthesis; L-lysine biosynthesis via DAP pathway; LL-2,6-diaminopimelate from (S)-tetrahydrodipicolinate (aminotransferase route): step 1/1. Involved in the synthesis of meso-diaminopimelate (m-DAP or DL-DAP), required for both lysine and peptidoglycan biosynthesis. Catalyzes the direct conversion of tetrahydrodipicolinate to LL-diaminopimelate. This chain is LL-diaminopimelate aminotransferase, found in Synechococcus sp. (strain RCC307).